Consider the following 21-residue polypeptide: Nigrocin-2JDa (21 aa).

A disulfide bond links C15 and C21.

As to expression, expressed by the skin glands.

It localises to the secreted. Functionally, has antibacterial activity against E.coli ATCC 25992 (MIC=16 uM), E.coli CIB 84492 (MIC=16 uM), S.aureus ATCC 25923 (MIC=16 uM) and S.aureus CIB 85462 (MIC=8 uM). Has antifungal activity against C.albicans (MIC=63 uM). Has hemolytic activity against rabbit erythrocytes. The protein is Nigrocin-2JDa of Odorrana jingdongensis (Jingdong frog).